The primary structure comprises 155 residues: Ribosomal RNA large subunit methyltransferase H (155 aa).

Residues Leu72, Gly103, and 122 to 127 each bind S-adenosyl-L-methionine; that span reads LSDLTL.

This sequence belongs to the RNA methyltransferase RlmH family. As to quaternary structure, homodimer.

Its subcellular location is the cytoplasm. The enzyme catalyses pseudouridine(1915) in 23S rRNA + S-adenosyl-L-methionine = N(3)-methylpseudouridine(1915) in 23S rRNA + S-adenosyl-L-homocysteine + H(+). In terms of biological role, specifically methylates the pseudouridine at position 1915 (m3Psi1915) in 23S rRNA. The polypeptide is Ribosomal RNA large subunit methyltransferase H (Paracidovorax citrulli (strain AAC00-1) (Acidovorax citrulli)).